The chain runs to 232 residues: Orotidine 5'-phosphate decarboxylase (232 aa).

Residues Asp-11, Lys-32, 59 to 68 (DLKLHDIPHT), Thr-116, Arg-178, Gln-188, Gly-208, and Arg-209 each bind substrate. Lys-61 serves as the catalytic Proton donor.

It belongs to the OMP decarboxylase family. Type 1 subfamily. Homodimer.

It carries out the reaction orotidine 5'-phosphate + H(+) = UMP + CO2. Its pathway is pyrimidine metabolism; UMP biosynthesis via de novo pathway; UMP from orotate: step 2/2. Functionally, catalyzes the decarboxylation of orotidine 5'-monophosphate (OMP) to uridine 5'-monophosphate (UMP). The polypeptide is Orotidine 5'-phosphate decarboxylase (Synechococcus sp. (strain JA-3-3Ab) (Cyanobacteria bacterium Yellowstone A-Prime)).